The following is a 260-amino-acid chain: Indole-3-glycerol phosphate synthase (260 aa).

It belongs to the TrpC family.

The enzyme catalyses 1-(2-carboxyphenylamino)-1-deoxy-D-ribulose 5-phosphate + H(+) = (1S,2R)-1-C-(indol-3-yl)glycerol 3-phosphate + CO2 + H2O. Its pathway is amino-acid biosynthesis; L-tryptophan biosynthesis; L-tryptophan from chorismate: step 4/5. The polypeptide is Indole-3-glycerol phosphate synthase (Neisseria meningitidis serogroup B (strain ATCC BAA-335 / MC58)).